The sequence spans 430 residues: Probable protein phosphatase 1N (430 aa).

Residues 16-65 (CKKKEREKEGREEEEEEEAGRRAPEGPRSLLTAPRRAQRPHGGAEASGGL) form a disordered region. Positions 17-26 (KKKEREKEGR) are enriched in basic and acidic residues. The region spanning 66 to 326 (RFGASAAQGW…DNMTCILVCF (261 aa)) is the PPM-type phosphatase domain. Mn(2+) contacts are provided by Asp-103, Gly-104, Asp-274, and Asp-317. Residues 407–430 (GEKGQDGAGKSNPTHLGSALDMEA) are disordered.

The protein belongs to the PP2C family. Requires Mg(2+) as cofactor. The cofactor is Mn(2+).

The catalysed reaction is O-phospho-L-seryl-[protein] + H2O = L-seryl-[protein] + phosphate. It carries out the reaction O-phospho-L-threonyl-[protein] + H2O = L-threonyl-[protein] + phosphate. The sequence is that of Probable protein phosphatase 1N (PPM1N) from Homo sapiens (Human).